A 79-amino-acid polypeptide reads, in one-letter code: Cell division protein ZapB (79 aa).

Positions 4–78 (EVFEKLEAKV…LQALLGKMEE (75 aa)) form a coiled coil.

This sequence belongs to the ZapB family. Homodimer. The ends of the coiled-coil dimer bind to each other, forming polymers. Interacts with FtsZ.

It localises to the cytoplasm. In terms of biological role, non-essential, abundant cell division factor that is required for proper Z-ring formation. It is recruited early to the divisome by direct interaction with FtsZ, stimulating Z-ring assembly and thereby promoting cell division earlier in the cell cycle. Its recruitment to the Z-ring requires functional FtsA or ZipA. The chain is Cell division protein ZapB from Cronobacter sakazakii (strain ATCC BAA-894) (Enterobacter sakazakii).